Reading from the N-terminus, the 225-residue chain is Phosphatidylserine decarboxylase proenzyme (225 aa).

Catalysis depends on S195, which acts as the Schiff-base intermediate with substrate; via pyruvic acid. S195 is subject to Pyruvic acid (Ser); by autocatalysis.

Belongs to the phosphatidylserine decarboxylase family. PSD-A subfamily. In terms of assembly, heterodimer of a large membrane-associated beta subunit and a small pyruvoyl-containing alpha subunit. It depends on pyruvate as a cofactor. Is synthesized initially as an inactive proenzyme. Formation of the active enzyme involves a self-maturation process in which the active site pyruvoyl group is generated from an internal serine residue via an autocatalytic post-translational modification. Two non-identical subunits are generated from the proenzyme in this reaction, and the pyruvate is formed at the N-terminus of the alpha chain, which is derived from the carboxyl end of the proenzyme. The post-translation cleavage follows an unusual pathway, termed non-hydrolytic serinolysis, in which the side chain hydroxyl group of the serine supplies its oxygen atom to form the C-terminus of the beta chain, while the remainder of the serine residue undergoes an oxidative deamination to produce ammonia and the pyruvoyl prosthetic group on the alpha chain.

The protein localises to the cell membrane. The enzyme catalyses a 1,2-diacyl-sn-glycero-3-phospho-L-serine + H(+) = a 1,2-diacyl-sn-glycero-3-phosphoethanolamine + CO2. Its pathway is phospholipid metabolism; phosphatidylethanolamine biosynthesis; phosphatidylethanolamine from CDP-diacylglycerol: step 2/2. In terms of biological role, catalyzes the formation of phosphatidylethanolamine (PtdEtn) from phosphatidylserine (PtdSer). The sequence is that of Phosphatidylserine decarboxylase proenzyme from Gluconobacter oxydans (strain 621H) (Gluconobacter suboxydans).